Consider the following 606-residue polypeptide: RUN and FYVE domain-containing protein 2 (606 aa).

An RUN domain is found at 37-169 (DSDYPPLQQF…IDANLCVKGE (133 aa)). Positions 210–534 (EELNRQLNST…IKEANKALQG (325 aa)) form a coiled coil. The segment at 540–598 (DKEATHCKLCEKEFSLSKRKHHCRNCGEIFCNACSDNELPLPSSPKPVRVCDSCHALLI) adopts an FYVE-type zinc-finger fold. Zn(2+) is bound by residues Cys-546, Cys-549, Cys-562, Cys-565, Cys-570, Cys-573, Cys-590, and Cys-593.

As to quaternary structure, interacts with BMX. In terms of tissue distribution, expressed in brain, lung and testis.

The protein resides in the nucleus. This Homo sapiens (Human) protein is RUN and FYVE domain-containing protein 2 (RUFY2).